The following is a 561-amino-acid chain: DNA ligase B (561 aa).

The active-site N6-AMP-lysine intermediate is the Lys-125.

This sequence belongs to the NAD-dependent DNA ligase family. LigB subfamily.

The enzyme catalyses NAD(+) + (deoxyribonucleotide)n-3'-hydroxyl + 5'-phospho-(deoxyribonucleotide)m = (deoxyribonucleotide)n+m + AMP + beta-nicotinamide D-nucleotide.. Catalyzes the formation of phosphodiester linkages between 5'-phosphoryl and 3'-hydroxyl groups in double-stranded DNA using NAD as a coenzyme and as the energy source for the reaction. The sequence is that of DNA ligase B from Salmonella heidelberg (strain SL476).